Here is a 296-residue protein sequence, read N- to C-terminus: Chelated iron transport system membrane protein YfeB (296 aa).

In terms of domain architecture, ABC transporter spans 11-246; sequence LVVDNVTVTY…NLEMTFGGVL (236 aa). Residue 44-51 participates in ATP binding; the sequence is GVNGSGKS. Residues 276-296 form a disordered region; the sequence is VFYGHTKNDPPAQSQSKEQNS. Residues 286 to 296 show a composition bias toward polar residues; the sequence is PAQSQSKEQNS.

This sequence belongs to the ABC transporter superfamily.

The protein resides in the cell inner membrane. Part of an ATP-driven transport system YfeABCD for chelated iron. This chain is Chelated iron transport system membrane protein YfeB (yfeB), found in Yersinia pestis.